The following is a 226-amino-acid chain: Charged multivesicular body protein 5 (226 aa).

Residues 21–93 (IAGVDARATN…NQSFNMEQAN (73 aa)) are a coiled coil. The segment covering 188–198 (KAPEAPSREPG) has biased composition (basic and acidic residues). A disordered region spans residues 188–226 (KAPEAPSREPGADSIVPGKSTIETDEFGLPKIPTSLKTT). The residue at position 201 (Ser-201) is a Phosphoserine. Thr-226 carries the phosphothreonine modification.

Belongs to the SNF7 family. In terms of assembly, probable peripherally associated component of the endosomal sorting required for transport complex III (ESCRT-III).

Its subcellular location is the endosome membrane. Functionally, probable peripherally associated component of the endosomal sorting required for transport complex III (ESCRT-III) which is involved in multivesicular bodies (MVBs) formation and sorting of endosomal cargo proteins into MVBs. MVBs contain intraluminal vesicles (ILVs) that are generated by invagination and scission from the limiting membrane of the endosome and are delivered to lysosomes enabling degradation of membrane proteins. Specifically down-regulates Notch signaling activity in the germarium, probably by facilitating Notch endocytosis. This chain is Charged multivesicular body protein 5, found in Drosophila melanogaster (Fruit fly).